A 583-amino-acid chain; its full sequence is L-arabonate dehydratase (583 aa).

[4Fe-4S] cluster is bound by residues cysteine 56, cysteine 124, and cysteine 197.

The protein belongs to the IlvD/Edd family. Homodimer. [4Fe-4S] cluster is required as a cofactor.

It catalyses the reaction L-arabinonate = 2-dehydro-3-deoxy-L-arabinonate + H2O. Activity is enhanced by Mg(2+), being optimal with a concentration of 1-10 mM Mg(2+). Catalyzes the dehydration of L-arabonate to L-2-keto-3-deoxyarabonate (L-KDA). Is involved in a degradation pathway of L-arabinose that allows A.brasilense to grow on L-arabinose as a sole carbon source. To a lesser extent, can also use D-xylonate as substrate, but not D-galactonate, D-arabonate, and D-gluconate. The chain is L-arabonate dehydratase (araC) from Azospirillum brasilense.